Consider the following 401-residue polypeptide: Acetate kinase (401 aa).

Asn7 contacts Mg(2+). Residue Lys14 coordinates ATP. Arg90 is a substrate binding site. The active-site Proton donor/acceptor is the Asp147. ATP contacts are provided by residues 207–211, 282–284, and 331–335; these read HMGNG, DMR, and GIGEN. Residue Glu385 coordinates Mg(2+).

The protein belongs to the acetokinase family. In terms of assembly, homodimer. The cofactor is Mg(2+). Mn(2+) is required as a cofactor.

The protein localises to the cytoplasm. It catalyses the reaction acetate + ATP = acetyl phosphate + ADP. The protein operates within metabolic intermediate biosynthesis; acetyl-CoA biosynthesis; acetyl-CoA from acetate: step 1/2. Catalyzes the formation of acetyl phosphate from acetate and ATP. Can also catalyze the reverse reaction. In Clostridium acetobutylicum (strain ATCC 824 / DSM 792 / JCM 1419 / IAM 19013 / LMG 5710 / NBRC 13948 / NRRL B-527 / VKM B-1787 / 2291 / W), this protein is Acetate kinase.